A 2180-amino-acid polypeptide reads, in one-letter code: DNA polymerase epsilon catalytic subunit A (2180 aa).

Residues cysteine 2067, cysteine 2070, cysteine 2089, and cysteine 2092 each coordinate Zn(2+). The CysA-type zinc finger occupies 2067-2092; it reads CENCAYFSDLDICMSDLRSMFKCSKC. Residues cysteine 2123, cysteine 2126, cysteine 2138, and cysteine 2140 each coordinate [4Fe-4S] cluster. A CysB motif motif is present at residues 2123-2140; that stretch reads CAKCRKIKSDTMSAYCTC.

Belongs to the DNA polymerase type-B family. As to quaternary structure, heterotetramer. Consists of 4 subunits: POL2, DPB2, DPB3 and DPB4. [4Fe-4S] cluster is required as a cofactor.

Its subcellular location is the nucleus. It carries out the reaction DNA(n) + a 2'-deoxyribonucleoside 5'-triphosphate = DNA(n+1) + diphosphate. In terms of biological role, DNA polymerase II participates in chromosomal DNA replication. The protein is DNA polymerase epsilon catalytic subunit A (POL2) of Eremothecium gossypii (strain ATCC 10895 / CBS 109.51 / FGSC 9923 / NRRL Y-1056) (Yeast).